Here is a 242-residue protein sequence, read N- to C-terminus: 1-(5-phosphoribosyl)-5-[(5-phosphoribosylamino)methylideneamino] imidazole-4-carboxamide isomerase (242 aa).

Residue Asp8 is the Proton acceptor of the active site. Asp129 acts as the Proton donor in catalysis.

This sequence belongs to the HisA/HisF family.

It localises to the cytoplasm. It catalyses the reaction 1-(5-phospho-beta-D-ribosyl)-5-[(5-phospho-beta-D-ribosylamino)methylideneamino]imidazole-4-carboxamide = 5-[(5-phospho-1-deoxy-D-ribulos-1-ylimino)methylamino]-1-(5-phospho-beta-D-ribosyl)imidazole-4-carboxamide. It functions in the pathway amino-acid biosynthesis; L-histidine biosynthesis; L-histidine from 5-phospho-alpha-D-ribose 1-diphosphate: step 4/9. The protein is 1-(5-phosphoribosyl)-5-[(5-phosphoribosylamino)methylideneamino] imidazole-4-carboxamide isomerase of Clostridium botulinum (strain ATCC 19397 / Type A).